We begin with the raw amino-acid sequence, 61 residues long: Short neurotoxin 1 (61 aa).

4 cysteine pairs are disulfide-bonded: cysteine 3-cysteine 23, cysteine 17-cysteine 40, cysteine 42-cysteine 53, and cysteine 54-cysteine 59.

The protein belongs to the three-finger toxin family. Short-chain subfamily. Type I alpha-neurotoxin sub-subfamily. In terms of tissue distribution, expressed by the venom gland.

The protein localises to the secreted. Functionally, binds to muscle nicotinic acetylcholine receptor (nAChR) and inhibit acetylcholine from binding to the receptor, thereby impairing neuromuscular transmission. The chain is Short neurotoxin 1 from Naja samarensis (Peters' cobra).